Consider the following 1136-residue polypeptide: Solute carrier family 12 member 2 (1136 aa).

2 disordered regions span residues 1–73 (MSAS…SVSG) and 91–121 (PDAAPAETAQNGDTVMSEGSLHSSTGGQQHH). The Cytoplasmic portion of the chain corresponds to 1-208 (MSASPPISAG…SESKGVVKFG (208 aa)). A phosphothreonine mark is found at T125, T129, T134, T139, and T152. A discontinuously helical transmembrane segment spans residues 209–234 (WIKGVLVRCMLNIWGVMLFIRMTWIV). L219 contacts Na(+). K(+)-binding residues include N220 and I221. Position 222 (W222) interacts with Na(+). Positions 223, 224, and 225 each coordinate chloride. Residues 235 to 238 (GQAG) are Extracellular-facing. Residues 239-261 (IAYSCIIVIMATVVTTITGCSTS) form a helical membrane-spanning segment. Topologically, residues 262–285 (AIATNGFVRGGGAYYLISRSLGPE) are cytoplasmic. A helical transmembrane segment spans residues 286 to 314 (FGGSIGLIFAFANAVAVAMYVVGFAETVV). Position 294 (F294) interacts with chloride. A K(+)-binding site is contributed by Y305. Topologically, residues 315–327 (ELLMDSGLLMIDQ) are extracellular. Transmembrane regions (helical) follow at residues 328–351 (TNDIRVIGTITVILLLGISVAGME) and 352–376 (WEAKAQIFLLVILITAIFNYFIGSF). At 377-407 (IAVDSKKKFGFFSYDAGILAENFGPDFRGQT) the chain is on the extracellular side. Residues 408-427 (FFSVFSIFFPAATGILAGAN) traverse the membrane as a discontinuously helical segment. K(+) contacts are provided by P417, A418, and T420. Chloride contacts are provided by P417 and A418. Chloride is bound by residues G421 and I422. At 428 to 438 (ISGDLADPQMA) the chain is on the cytoplasmic side. A helical membrane pass occupies residues 439-462 (IPKGTLLAILITGLVYVGVAISAG). Residues 463–523 (ACIVRDATGI…DFQVMSVVSG (61 aa)) are Extracellular-facing. Residues N475 and N481 are each glycosylated (N-linked (GlcNAc...) asparagine). Cysteines 496 and 507 form a disulfide. The helical transmembrane segment at 524-551 (FSPLISAGIFSATLSSALASLVSAPKVF) threads the bilayer. 3 residues coordinate Na(+): A535, S538, and S539. The Cytoplasmic portion of the chain corresponds to 552-576 (QALCKDNIYPGIAIFGKGYGKNNEP). The next 2 helical transmembrane spans lie at 577 to 595 (LRGYFLTFGIALAFILIAE) and 596 to 619 (LNVIAPIISNFFLASYALINFSVF). 2 residues coordinate chloride: F607 and Y611. The Cytoplasmic portion of the chain corresponds to 620–636 (HASLANSPGWRPSFKYY). Transmembrane regions (helical) follow at residues 637-656 (NMWASLAGAILCCVVMFIIN) and 657-672 (WWAALLTNVIVLSLYI). Residues 673–1136 (YVSYKKPDVN…NHQSVLTFYS (464 aa)) lie on the Cytoplasmic side of the membrane. The segment at 689 to 702 (ALTYHQALTHSLQL) is scissor helix. The tract at residues 875 to 921 (SKDSDGDSSKPSSKATSVQNSPAVQKDEDDDGKAHTQPLLKKDKKSP) is disordered. The residue at position 1059 (T1059) is a Phosphothreonine.

This sequence belongs to the SLC12A transporter family. In terms of assembly, homodimer; adopts a domain-swap conformation at the scissor helices connecting the transmembrane domain and C-terminal domain. Post-translationally, phosphorylated at Thr-125, Thr-129 and Thr-134 by OXSR1/OSR1 and STK39/SPAK downstream of WNK kinases (WNK1, WNK2, WNK3 or WNK4), promoting its activity.

It is found in the basolateral cell membrane. It carries out the reaction K(+)(out) + 2 chloride(out) + Na(+)(out) = K(+)(in) + 2 chloride(in) + Na(+)(in). With respect to regulation, activated following phosphorylation by OXSR1/OSR1 and STK39/SPAK. Inhibited by bumetanide. Cation-chloride cotransporter which mediates the electroneutral transport of chloride, potassium and/or sodium ions across the membrane. Plays a vital role in the regulation of ionic balance and cell volume. Important for maintenance of endolymph volume in the otic vesicle, probably by regulating ion homeostasis. Also plays a role in normal development of the swim bladder. This Danio rerio (Zebrafish) protein is Solute carrier family 12 member 2.